A 147-amino-acid chain; its full sequence is NADH-quinone oxidoreductase subunit A (147 aa).

A run of 3 helical transmembrane segments spans residues 16–36 (FAIFLIVAIGLCCLMLVGGWF), 68–88 (FYLVAMFFVIFDVEALYLFAW), and 98–118 (VGFVEAAIFIFVLLAGLVYLV).

It belongs to the complex I subunit 3 family. As to quaternary structure, NDH-1 is composed of 13 different subunits. Subunits NuoA, H, J, K, L, M, N constitute the membrane sector of the complex.

The protein resides in the cell inner membrane. The enzyme catalyses a quinone + NADH + 5 H(+)(in) = a quinol + NAD(+) + 4 H(+)(out). In terms of biological role, NDH-1 shuttles electrons from NADH, via FMN and iron-sulfur (Fe-S) centers, to quinones in the respiratory chain. The immediate electron acceptor for the enzyme in this species is believed to be ubiquinone. Couples the redox reaction to proton translocation (for every two electrons transferred, four hydrogen ions are translocated across the cytoplasmic membrane), and thus conserves the redox energy in a proton gradient. In Shigella boydii serotype 18 (strain CDC 3083-94 / BS512), this protein is NADH-quinone oxidoreductase subunit A.